Here is a 461-residue protein sequence, read N- to C-terminus: Putative 2,3-dihydroxypropane-1-sulfonate exporter (461 aa).

Residues 1–20 (MSHITTEDPATLRLPFKEKL) lie on the Cytoplasmic side of the membrane. A helical transmembrane segment spans residues 21-41 (SYGIGDLASNILLDIGTLYLL). Residues 42-47 (KFYTDV) are Periplasmic-facing. Residues 48 to 68 (LGLPGTYGGIIFLISKFFTAF) form a helical membrane-spanning segment. Topologically, residues 69–92 (TDMGTGIMLDSRRKIGPKGKFRPF) are cytoplasmic. The chain crosses the membrane as a helical span at residues 93 to 113 (ILYASFPVTLLAIANFVGTPF). At 114-123 (DVTGKTVMAT) the chain is on the periplasmic side. The chain crosses the membrane as a helical span at residues 124–144 (ILFMLYGLFFSMMNCSYGAMV). At 145–162 (PAITKNPNERASLAAWRQ) the chain is on the cytoplasmic side. The helical transmembrane segment at 163–183 (GGATLGLLLCTVGFVPVMNLI) threads the bilayer. Topologically, residues 184–188 (EGNQQ) are periplasmic. Residues 189–209 (LGYIFAATLFSLFGLLFMWIC) form a helical membrane-spanning segment. At 210–243 (YSGVKERYVETQPANPAQKPGLLQSFRAIAGNRP) the chain is on the cytoplasmic side. Residues 244–264 (LFILCIANLCTLGAFNVKLAI) traverse the membrane as a helical segment. The Periplasmic segment spans residues 265 to 276 (QVYYTQYVLNDP). Residues 277 to 297 (ILLSYMGFFSMGCIFIGVFLM) form a helical membrane-spanning segment. The Cytoplasmic segment spans residues 298–308 (PASVRRFGKKK). A helical transmembrane segment spans residues 309–329 (VYIGGLLIWVLGDLLNYFFGG). Gly-330 is a topological domain (periplasmic). A helical membrane pass occupies residues 331 to 351 (SVSFVAFSCLAFFGSAFVNSL). At 352-387 (NWALVSDTVEYGEWRTGVRSEGTVYTGFTFFRKVSQ) the chain is on the cytoplasmic side. A helical membrane pass occupies residues 388 to 408 (ALAGFFPGWMLTQIGYVPNVA). Residues 409–419 (QADHTIEGLRQ) lie on the Periplasmic side of the membrane. Residues 420-440 (LIFIYPSALAVVTIVAMGCFY) form a helical membrane-spanning segment. Residues 441 to 461 (SLNEKMYVRIVEEIEARKRTA) are Cytoplasmic-facing.

The protein belongs to the sodium:galactoside symporter (TC 2.A.2) family.

The protein resides in the cell inner membrane. Could be involved in the export of 2,3-dihydroxypropane-1-sulfonate (DHPS). In Escherichia coli (strain K12), this protein is Putative 2,3-dihydroxypropane-1-sulfonate exporter (yihP).